The primary structure comprises 167 residues: Urease accessory protein UreE (167 aa).

The disordered stretch occupies residues 135–167 (SGAYGGGHHHSHSHHEGDEFHSKPRLHHFGGSQ). Residues 157–167 (KPRLHHFGGSQ) show a composition bias toward basic residues.

Belongs to the UreE family.

It is found in the cytoplasm. Its function is as follows. Involved in urease metallocenter assembly. Binds nickel. Probably functions as a nickel donor during metallocenter assembly. The polypeptide is Urease accessory protein UreE (Nitrosococcus oceani (strain ATCC 19707 / BCRC 17464 / JCM 30415 / NCIMB 11848 / C-107)).